Reading from the N-terminus, the 273-residue chain is Formamidopyrimidine-DNA glycosylase (273 aa).

Catalysis depends on P2, which acts as the Schiff-base intermediate with DNA. Residue E3 is the Proton donor of the active site. K57 (proton donor; for beta-elimination activity) is an active-site residue. DNA is bound by residues H91, R110, and K151. Residues 236-270 form an FPG-type zinc finger; that stretch reads QVYGRKGEACNDCGTIIEAKVIGQRNSYFCPHCQI. The active-site Proton donor; for delta-elimination activity is R260.

Belongs to the FPG family. In terms of assembly, monomer. It depends on Zn(2+) as a cofactor.

The catalysed reaction is Hydrolysis of DNA containing ring-opened 7-methylguanine residues, releasing 2,6-diamino-4-hydroxy-5-(N-methyl)formamidopyrimidine.. It catalyses the reaction 2'-deoxyribonucleotide-(2'-deoxyribose 5'-phosphate)-2'-deoxyribonucleotide-DNA = a 3'-end 2'-deoxyribonucleotide-(2,3-dehydro-2,3-deoxyribose 5'-phosphate)-DNA + a 5'-end 5'-phospho-2'-deoxyribonucleoside-DNA + H(+). Its function is as follows. Involved in base excision repair of DNA damaged by oxidation or by mutagenic agents. Acts as a DNA glycosylase that recognizes and removes damaged bases. Has a preference for oxidized purines, such as 7,8-dihydro-8-oxoguanine (8-oxoG). Has AP (apurinic/apyrimidinic) lyase activity and introduces nicks in the DNA strand. Cleaves the DNA backbone by beta-delta elimination to generate a single-strand break at the site of the removed base with both 3'- and 5'-phosphates. In Actinobacillus pleuropneumoniae serotype 7 (strain AP76), this protein is Formamidopyrimidine-DNA glycosylase.